We begin with the raw amino-acid sequence, 187 residues long: Elongation factor P (187 aa).

Belongs to the elongation factor P family.

The protein resides in the cytoplasm. It functions in the pathway protein biosynthesis; polypeptide chain elongation. In terms of biological role, involved in peptide bond synthesis. Stimulates efficient translation and peptide-bond synthesis on native or reconstituted 70S ribosomes in vitro. Probably functions indirectly by altering the affinity of the ribosome for aminoacyl-tRNA, thus increasing their reactivity as acceptors for peptidyl transferase. This chain is Elongation factor P, found in Tolumonas auensis (strain DSM 9187 / NBRC 110442 / TA 4).